The chain runs to 230 residues: Ropporin-1-like protein (230 aa).

One can recognise an RIIa domain in the interval 17 to 46 (PELPDILKQFTKAAIRTQPADVLRWSAGYF).

Belongs to the ropporin family. As to quaternary structure, component of the axonemal radial spoke complex 1 (RS1), at least composed of spoke head proteins RSPH1, RSPH3, RSPH9 and the cilia-specific component RSPH4A or sperm-specific component RSPH6A, spoke stalk proteins RSPH14, DNAJB13, DYDC1, ROPN1L and NME5, and the anchor protein IQUB. Interacts with FSCB; the interaction increases upon spermatozoa capacitation conditions. May interact with AKAP3. Interacts with CFAP61. Post-translationally, sumoylated, sumoylation decreases upon spermatozoa capacitation conditions.

The protein localises to the cell projection. It is found in the cilium. It localises to the flagellum. Its function is as follows. Functions as part of axonemal radial spoke complexes that play an important part in the motility of sperm and cilia. Important for male fertility. With ROPN1, involved in fibrous sheath integrity and sperm motility, plays a role in PKA-dependent signaling processes required for spermatozoa capacitation. This chain is Ropporin-1-like protein (ROPN1L), found in Homo sapiens (Human).